We begin with the raw amino-acid sequence, 175 residues long: Adenine phosphoribosyltransferase (175 aa).

The protein belongs to the purine/pyrimidine phosphoribosyltransferase family. Homodimer.

It is found in the cytoplasm. The enzyme catalyses AMP + diphosphate = 5-phospho-alpha-D-ribose 1-diphosphate + adenine. Its pathway is purine metabolism; AMP biosynthesis via salvage pathway; AMP from adenine: step 1/1. Its function is as follows. Catalyzes a salvage reaction resulting in the formation of AMP, that is energically less costly than de novo synthesis. The chain is Adenine phosphoribosyltransferase from Caldicellulosiruptor bescii (strain ATCC BAA-1888 / DSM 6725 / KCTC 15123 / Z-1320) (Anaerocellum thermophilum).